Here is a 224-residue protein sequence, read N- to C-terminus: ATP-dependent dethiobiotin synthetase BioD (224 aa).

Threonine 18 provides a ligand contact to Mg(2+). Lysine 39 is an active-site residue. Position 43 (serine 43) interacts with substrate. Positions 56 and 117 each coordinate Mg(2+). ATP contacts are provided by residues aspartate 56, glutamate 117–glycine 120, and asparagine 177–glutamate 178.

The protein belongs to the dethiobiotin synthetase family. In terms of assembly, homodimer. Requires Mg(2+) as cofactor.

The protein resides in the cytoplasm. It carries out the reaction (7R,8S)-7,8-diammoniononanoate + CO2 + ATP = (4R,5S)-dethiobiotin + ADP + phosphate + 3 H(+). Its pathway is cofactor biosynthesis; biotin biosynthesis; biotin from 7,8-diaminononanoate: step 1/2. In terms of biological role, catalyzes a mechanistically unusual reaction, the ATP-dependent insertion of CO2 between the N7 and N8 nitrogen atoms of 7,8-diaminopelargonic acid (DAPA, also called 7,8-diammoniononanoate) to form a ureido ring. The polypeptide is ATP-dependent dethiobiotin synthetase BioD (Xanthomonas euvesicatoria pv. vesicatoria (strain 85-10) (Xanthomonas campestris pv. vesicatoria)).